Consider the following 104-residue polypeptide: Urease subunit beta (104 aa).

The protein belongs to the urease beta subunit family. As to quaternary structure, heterotrimer of UreA (gamma), UreB (beta) and UreC (alpha) subunits. Three heterotrimers associate to form the active enzyme.

The protein localises to the cytoplasm. It carries out the reaction urea + 2 H2O + H(+) = hydrogencarbonate + 2 NH4(+). The protein operates within nitrogen metabolism; urea degradation; CO(2) and NH(3) from urea (urease route): step 1/1. This chain is Urease subunit beta, found in Mycolicibacterium vanbaalenii (strain DSM 7251 / JCM 13017 / BCRC 16820 / KCTC 9966 / NRRL B-24157 / PYR-1) (Mycobacterium vanbaalenii).